A 428-amino-acid polypeptide reads, in one-letter code: 3-phosphoshikimate 1-carboxyvinyltransferase (428 aa).

Positions 23, 24, and 28 each coordinate 3-phosphoshikimate. K23 is a phosphoenolpyruvate binding site. 2 residues coordinate phosphoenolpyruvate: G97 and R125. Residues S170, S171, Q172, S198, D314, N337, and K341 each contribute to the 3-phosphoshikimate site. Q172 serves as a coordination point for phosphoenolpyruvate. Residue D314 is the Proton acceptor of the active site. 3 residues coordinate phosphoenolpyruvate: R345, R387, and K412.

This sequence belongs to the EPSP synthase family. As to quaternary structure, monomer.

The protein localises to the cytoplasm. The catalysed reaction is 3-phosphoshikimate + phosphoenolpyruvate = 5-O-(1-carboxyvinyl)-3-phosphoshikimate + phosphate. It functions in the pathway metabolic intermediate biosynthesis; chorismate biosynthesis; chorismate from D-erythrose 4-phosphate and phosphoenolpyruvate: step 6/7. In terms of biological role, catalyzes the transfer of the enolpyruvyl moiety of phosphoenolpyruvate (PEP) to the 5-hydroxyl of shikimate-3-phosphate (S3P) to produce enolpyruvyl shikimate-3-phosphate and inorganic phosphate. This Yersinia pseudotuberculosis serotype IB (strain PB1/+) protein is 3-phosphoshikimate 1-carboxyvinyltransferase.